The sequence spans 210 residues: Na(+)-translocating NADH-quinone reductase subunit D (210 aa).

The next 5 membrane-spanning stretches (helical) occupy residues 42–62 (FVMT…VSLI), 72–92 (IIVQ…VLKA), 103–123 (VFVS…AFAM), 131–151 (FIDG…VAFF), and 178–198 (NGLM…IWAI).

Belongs to the NqrDE/RnfAE family. Composed of six subunits; NqrA, NqrB, NqrC, NqrD, NqrE and NqrF.

It localises to the cell inner membrane. It catalyses the reaction a ubiquinone + n Na(+)(in) + NADH + H(+) = a ubiquinol + n Na(+)(out) + NAD(+). Its function is as follows. NQR complex catalyzes the reduction of ubiquinone-1 to ubiquinol by two successive reactions, coupled with the transport of Na(+) ions from the cytoplasm to the periplasm. NqrA to NqrE are probably involved in the second step, the conversion of ubisemiquinone to ubiquinol. The polypeptide is Na(+)-translocating NADH-quinone reductase subunit D (Aliivibrio fischeri (strain ATCC 700601 / ES114) (Vibrio fischeri)).